Here is a 256-residue protein sequence, read N- to C-terminus: Astacin-like metalloprotease toxin 2 (256 aa).

The N-terminal stretch at 1-24 (MIPDVGFLVLLTGALFICIKAAPA) is a signal peptide. A propeptide spanning residues 25–52 (TTDVDPTFEGRIVMEGDILIREEQLTER) is cleaved from the precursor. A Peptidase M12A domain is found at 53 to 250 (NAIALENMRW…KKINTLYNCP (198 aa)). 2 disulfide bridges follow: Cys94–Cys249 and Cys117–Cys136. His144 is a binding site for Zn(2+). Residue Glu145 is part of the active site. Residues His148 and His154 each coordinate Zn(2+).

In terms of assembly, monomer. It depends on Zn(2+) as a cofactor. Expressed by the venom gland.

It localises to the secreted. With respect to regulation, inhibited by 1,10-phenanthroline. Its function is as follows. Zinc metalloprotease. Provoques deadhesion of endothelial cells from cell cultures, and also degradation of fibronectin, fibrinogen and gelatin in vitro. Its role in the venom is not fully understood but it might act as a spreading factor that facilitates diffusion of other venom toxins. Alternatively, it might be involved in the proteolytic processing of other venom toxins or it might play a role in extra-oral digestion of prey. In Loxosceles intermedia (Brown spider), this protein is Astacin-like metalloprotease toxin 2.